The following is a 132-amino-acid chain: Large ribosomal subunit protein bL21 (132 aa).

The segment at 104–132 (GKAPSIGPRPPREKKPVVETSAEADDAAA) is disordered.

The protein belongs to the bacterial ribosomal protein bL21 family. In terms of assembly, part of the 50S ribosomal subunit. Contacts protein L20.

Its function is as follows. This protein binds to 23S rRNA in the presence of protein L20. The sequence is that of Large ribosomal subunit protein bL21 from Rhodopseudomonas palustris (strain BisB18).